We begin with the raw amino-acid sequence, 490 residues long: Glutathione hydrolase 6 (490 aa).

Topologically, residues 1–52 (MEPEAGPVLYQKLRVWEPSLESEEEEEEISEQLILDASGPHDSSGNKAGRLP) are cytoplasmic. A helical; Signal-anchor for type II membrane protein transmembrane segment spans residues 53–73 (GAWAQLVAALLLLAIGFSLAV). Topologically, residues 74 to 490 (RQLCSSGASP…PSGCCPFQGF (417 aa)) are extracellular. N-linked (GlcNAc...) asparagine glycans are attached at residues Asn-160, Asn-165, and Asn-374.

The protein belongs to the gamma-glutamyltransferase family. In terms of assembly, heterodimer composed of the light and heavy chains. The active site is located in the light chain. Post-translationally, cleaved by autocatalysis into a large and a small subunit and the autocatalytic cleavage is essential to the functional activation of the enzyme.

It localises to the membrane. It catalyses the reaction an N-terminal (5-L-glutamyl)-[peptide] + an alpha-amino acid = 5-L-glutamyl amino acid + an N-terminal L-alpha-aminoacyl-[peptide]. The enzyme catalyses glutathione + H2O = L-cysteinylglycine + L-glutamate. The catalysed reaction is an S-substituted glutathione + H2O = an S-substituted L-cysteinylglycine + L-glutamate. It functions in the pathway sulfur metabolism; glutathione metabolism. Its function is as follows. Hydrolyzes and transfers gamma-glutamyl moieties from glutathione and other gamma-glutamyl compounds to acceptors. This chain is Glutathione hydrolase 6, found in Bos taurus (Bovine).